A 447-amino-acid chain; its full sequence is Exodeoxyribonuclease 7 large subunit (447 aa).

It belongs to the XseA family. Heterooligomer composed of large and small subunits.

It is found in the cytoplasm. The catalysed reaction is Exonucleolytic cleavage in either 5'- to 3'- or 3'- to 5'-direction to yield nucleoside 5'-phosphates.. Its function is as follows. Bidirectionally degrades single-stranded DNA into large acid-insoluble oligonucleotides, which are then degraded further into small acid-soluble oligonucleotides. The chain is Exodeoxyribonuclease 7 large subunit from Geobacter sulfurreducens (strain ATCC 51573 / DSM 12127 / PCA).